We begin with the raw amino-acid sequence, 422 residues long: GTPase Obg (422 aa).

The region spanning 1-158 is the Obg domain; sequence MFYDRAKIYV…LWLELELKVI (158 aa). In terms of domain architecture, OBG-type G spans 159–330; that stretch reads ADVGLIGFPN…VIHRVAELLA (172 aa). GTP is bound by residues 165 to 172, 190 to 194, 212 to 215, 282 to 285, and 311 to 313; these read GFPNAGKS, FTTLV, DIPG, NKMD, and SAA. Residues Ser172 and Thr192 each coordinate Mg(2+). The region spanning 344–422 is the OCT domain; that stretch reads VMFEPEERFN…IGDWEFEWSE (79 aa).

This sequence belongs to the TRAFAC class OBG-HflX-like GTPase superfamily. OBG GTPase family. In terms of assembly, monomer. The cofactor is Mg(2+).

Its subcellular location is the cytoplasm. Its function is as follows. An essential GTPase which binds GTP, GDP and possibly (p)ppGpp with moderate affinity, with high nucleotide exchange rates and a fairly low GTP hydrolysis rate. Plays a role in control of the cell cycle, stress response, ribosome biogenesis and in those bacteria that undergo differentiation, in morphogenesis control. In Desulforamulus reducens (strain ATCC BAA-1160 / DSM 100696 / MI-1) (Desulfotomaculum reducens), this protein is GTPase Obg.